The following is a 1185-amino-acid chain: Mucin-6 (1185 aa).

2 disulfide bridges follow: Cys1–Cys132 and Cys23–Cys168. A VWFD 1 domain is found at 1–169; that stretch reads CSTWGGGHFS…KMDDPSEICL (169 aa). Asn223 is a glycosylation site (N-linked (GlcNAc...) (complex) asparagine). The TIL 1 domain occupies 257–312; the sequence is CSANQIYEECGSPCIKTCSNPEYSCSSHCTYGCFCPEGTVLDDISKNRTCVHLEQC. The region spanning 350-534 is the VWFD 2 domain; it reads GRCSLEGGSF…AMERETDPCA (185 aa). 2 disulfides stabilise this stretch: Cys352–Cys488 and Cys374–Cys533. TIL domains are found at residues 619–676 and 737–782; these read CTGN…KSHC and GATC…PEEC. Residues 821 to 993 enclose the VWFD 3 domain; it reads STCNLYGEGH…NSWKENPLCG (173 aa). Disulfide bonds link Cys823/Cys957, Cys845/Cys992, Cys854/Cys954, and Cys872/Cys879. The N-linked (GlcNAc...) (complex) asparagine glycan is linked to Asn930. The segment covering 1160–1178 has biased composition (low complexity); it reads PTATQPTSPSTSSASTVLT. Positions 1160-1185 are disordered; sequence PTATQPTSPSTSSASTVLTETTNPPV.

Multimer; disulfide-linked. N-glycosylated with N-acetylglucosamine (6.7%), N-acetylgalactosamine (0.6%), galactose (1.8%), mannose (4.6%), N-acetylneuraminic acid (1.0%) and sulfate-containing glycans (0.7%).

The protein localises to the secreted. In terms of biological role, ovomucin, the glycoprotein responsible for the gel properties of egg white, is composed for 2 subunits, alpha-ovomucin/MUC5B and beta-ovomucin/MUC6. In Gallus gallus (Chicken), this protein is Mucin-6 (MUC6).